The sequence spans 287 residues: RNA polymerase sigma factor RpoH (287 aa).

The sigma-70 factor domain-2 stretch occupies residues 54 to 123; that stretch reads LILSHLRFVI…IHEYVLRNWR (70 aa). Residues 78 to 81 carry the Interaction with polymerase core subunit RpoC motif; the sequence is DLIQ. The interval 230 to 283 is sigma-70 factor domain-4; that stretch reads ALSSLDERSRNIIHARWLDDSDHKMTLREIAHNYGISAERVRQLEKNAMKKLKV. Residues 256-275 constitute a DNA-binding region (H-T-H motif); that stretch reads LREIAHNYGISAERVRQLEK.

Belongs to the sigma-70 factor family. RpoH subfamily. In terms of assembly, interacts with the RNA polymerase core enzyme.

The protein localises to the cytoplasm. Sigma factors are initiation factors that promote the attachment of RNA polymerase to specific initiation sites and are then released. This sigma factor is involved in regulation of expression of heat shock genes. The chain is RNA polymerase sigma factor RpoH from Buchnera aphidicola subsp. Baizongia pistaciae (strain Bp).